We begin with the raw amino-acid sequence, 260 residues long: Neuraminyllactose-binding hemagglutinin (260 aa).

Positions 1–27 (MKTNGHFKDFAWKKCLLGASVGALLVG) are cleaved as a signal peptide. A lipid anchor (N-palmitoyl cysteine) is attached at Cys-28. A lipid anchor (S-diacylglycerol cysteine) is attached at Cys-28. Residues 134 to 139 (KRTIQK) form an N-acetyl-neuraminyl-alpha(2,3)-lactose binding motif region.

Its subcellular location is the cell outer membrane. This Helicobacter pylori (Campylobacter pylori) protein is Neuraminyllactose-binding hemagglutinin (hpaA).